We begin with the raw amino-acid sequence, 225 residues long: ATP-dependent Clp protease proteolytic subunit (225 aa).

The Nucleophile role is filled by Ser123. His148 is an active-site residue.

This sequence belongs to the peptidase S14 family. Fourteen ClpP subunits assemble into 2 heptameric rings which stack back to back to give a disk-like structure with a central cavity, resembling the structure of eukaryotic proteasomes.

It localises to the cytoplasm. The enzyme catalyses Hydrolysis of proteins to small peptides in the presence of ATP and magnesium. alpha-casein is the usual test substrate. In the absence of ATP, only oligopeptides shorter than five residues are hydrolyzed (such as succinyl-Leu-Tyr-|-NHMec, and Leu-Tyr-Leu-|-Tyr-Trp, in which cleavage of the -Tyr-|-Leu- and -Tyr-|-Trp bonds also occurs).. Functionally, cleaves peptides in various proteins in a process that requires ATP hydrolysis. Has a chymotrypsin-like activity. Plays a major role in the degradation of misfolded proteins. The protein is ATP-dependent Clp protease proteolytic subunit of Chlorobium chlorochromatii (strain CaD3).